We begin with the raw amino-acid sequence, 403 residues long: Multifunctional CCA protein (403 aa).

ATP contacts are provided by G8 and R11. Residues G8 and R11 each contribute to the CTP site. Positions 21 and 23 each coordinate Mg(2+). R91, R137, and R140 together coordinate ATP. Residues R91, R137, and R140 each contribute to the CTP site. Positions 228-329 (TGIHTLMVAK…LKVLGLLDVW (102 aa)) constitute an HD domain.

Belongs to the tRNA nucleotidyltransferase/poly(A) polymerase family. Bacterial CCA-adding enzyme type 1 subfamily. Monomer. Can also form homodimers and oligomers. Mg(2+) serves as cofactor. It depends on Ni(2+) as a cofactor.

The enzyme catalyses a tRNA precursor + 2 CTP + ATP = a tRNA with a 3' CCA end + 3 diphosphate. The catalysed reaction is a tRNA with a 3' CCA end + 2 CTP + ATP = a tRNA with a 3' CCACCA end + 3 diphosphate. Its function is as follows. Catalyzes the addition and repair of the essential 3'-terminal CCA sequence in tRNAs without using a nucleic acid template. Adds these three nucleotides in the order of C, C, and A to the tRNA nucleotide-73, using CTP and ATP as substrates and producing inorganic pyrophosphate. tRNA 3'-terminal CCA addition is required both for tRNA processing and repair. Also involved in tRNA surveillance by mediating tandem CCA addition to generate a CCACCA at the 3' terminus of unstable tRNAs. While stable tRNAs receive only 3'-terminal CCA, unstable tRNAs are marked with CCACCA and rapidly degraded. This Vibrio cholerae serotype O1 (strain ATCC 39315 / El Tor Inaba N16961) protein is Multifunctional CCA protein.